A 433-amino-acid chain; its full sequence is MASPVAIAAQAGKLLRERALRPLLAVRSQAGHLTPRRWLNLQEYQSKKLMSEHGVRVQRFFVANTAKEALEAAKRLNAKEIVLKAQILAGGRGKGVFNSGLKGGVHLTKDPKVVGELAQQMIGYNLATKQTPKEGVKVNKVMVAEALDISRETYLAILMDRSHNGPVIVGSPQGGVDIEEVAASSPELIFKEQIDIFEGIKDSQAQRMAENLGFLGSLKNQAADQITKLYHLFLKIDATQVEVNPFGETPEGQVVCFDAKINFDDNAEFRQKDIFAMDDKSENEPIENEAARYDLKYIGLDGNIACFVNGAGLAMATCDIIFLNGGKPANFLDLGGGVKEAQVYEAFKLLTSDPKVEAILVNIFGGIVNCAIIANGITKACRELELKVPLVVRLEGTNVQEAQNILKSSGLPITSAVDLEDAAKKAVASVAKK.

A mitochondrion-targeting transit peptide spans 1 to 38 (MASPVAIAAQAGKLLRERALRPLLAVRSQAGHLTPRRW). The ATP-grasp domain maps to 47–275 (KKLMSEHGVR…NAEFRQKDIF (229 aa)). Q58 contributes to the GTP binding site. Position 67 is an N6-acetyllysine; alternate (K67). K67 bears the N6-succinyllysine; alternate mark. K74 is modified (N6-acetyllysine). At K79 the chain carries N6-succinyllysine. Residue 91–93 (GRG) participates in GTP binding. 3 positions are modified to N6-acetyllysine: K112, K133, and K140. GTP is bound at residue L147. Position 162 is a phosphoserine (S162). At K201 the chain carries N6-acetyllysine. S217 carries the phosphoserine modification. Residues K219 and K228 each carry the N6-acetyllysine modification. The Mg(2+) site is built by N244 and D258. K272 carries the N6-acetyllysine modification. Substrate is bound at residue N309. K339 bears the N6-succinyllysine mark. The residue at position 348 (K348) is an N6-acetyllysine. 366-368 (GIV) contributes to the substrate binding site. An N6-acetyllysine mark is found at K387, K407, and K424.

The protein belongs to the succinate/malate CoA ligase beta subunit family. GTP-specific subunit beta subfamily. In terms of assembly, heterodimer of an alpha and a beta subunit. The beta subunit determines specificity for GTP. Mg(2+) serves as cofactor.

It localises to the mitochondrion. The catalysed reaction is GTP + succinate + CoA = succinyl-CoA + GDP + phosphate. The protein operates within carbohydrate metabolism; tricarboxylic acid cycle; succinate from succinyl-CoA (ligase route): step 1/1. Its function is as follows. GTP-specific succinyl-CoA synthetase functions in the citric acid cycle (TCA), coupling the hydrolysis of succinyl-CoA to the synthesis of GTP and thus represents the only step of substrate-level phosphorylation in the TCA. The beta subunit provides nucleotide specificity of the enzyme and binds the substrate succinate, while the binding sites for coenzyme A and phosphate are found in the alpha subunit. The chain is Succinate--CoA ligase [GDP-forming] subunit beta, mitochondrial from Mus musculus (Mouse).